The sequence spans 492 residues: MSMHTLLQYKWEMMTPEFIVLGTALILSLMDLFMPDDKDRRPLAWIAFVGVAIALIATIGLIPAKAVSILNDTFRLDAFGKAFKLLLLAGGALSLLLAFDYRPKEGLKDRGEFYYLLLCALLGAMIMASSGDLITLFVGLELLSISSYILAGIRKTSMQANESAMKYVINGGISTAITLFGMSYIFGLTGTTNIKEIALEVQKLTDSGYQYILAIAFLMMLVGLSFKISSVPFHMWTPDVYQGAPTPVTAFLSVVSKTAGFVIVLRLFITIFTQAPAQGKDPSSLLFSMQDYIAFLAGATMIIGNTIALKQRSMKRLFAYSSIAHAGYILVGFAAMSWVMIDSIWFYLLAYLFMNLGAFAILQRISDEADSDDLSHFAGLYQRNPLLAVAMGIFLLSLAGIPGTAGFIGKLNIFLGALMTEPGHYVLAAVMIATTVVSYVYYFGIFVQIFFRPADETTSLRMPIGLAMVVVLCALGTLLFGVVPGLAYHFLE.

Helical transmembrane passes span 13-33, 42-62, 79-99, 111-131, 133-153, 168-188, 211-231, 251-271, 284-304, 318-340, 344-366, 388-408, 426-446, and 463-483; these read MMTP…MDLF, PLAW…IGLI, FGKA…LLAF, GEFY…ASSG, LITL…LAGI, VING…IFGL, YILA…ISSV, FLSV…FITI, SLLF…MIIG, FAYS…SWVM, IWFY…QRIS, AVAM…AGFI, VLAA…FGIF, and PIGL…FGVV.

The protein belongs to the complex I subunit 2 family. NDH-1 is composed of 14 different subunits. Subunits NuoA, H, J, K, L, M, N constitute the membrane sector of the complex.

Its subcellular location is the cell membrane. It carries out the reaction a quinone + NADH + 5 H(+)(in) = a quinol + NAD(+) + 4 H(+)(out). NDH-1 shuttles electrons from NADH, via FMN and iron-sulfur (Fe-S) centers, to quinones in the respiratory chain. The immediate electron acceptor for the enzyme in this species is believed to be a menaquinone. Couples the redox reaction to proton translocation (for every two electrons transferred, four hydrogen ions are translocated across the cytoplasmic membrane), and thus conserves the redox energy in a proton gradient. The polypeptide is NADH-quinone oxidoreductase subunit N (Geobacillus sp. (strain WCH70)).